The primary structure comprises 67 residues: Probable Sec-independent protein translocase protein TatE (67 aa).

Residues 4 to 21 form a helical membrane-spanning segment; it reads ISITKLLVIAALVVLLFG.

The protein belongs to the TatA/E family. TatE subfamily.

It is found in the cell inner membrane. Its function is as follows. Part of the twin-arginine translocation (Tat) system that transports large folded proteins containing a characteristic twin-arginine motif in their signal peptide across membranes. TatE shares overlapping functions with TatA. This is Probable Sec-independent protein translocase protein TatE from Citrobacter rodentium (strain ICC168) (Citrobacter freundii biotype 4280).